The following is a 341-amino-acid chain: Putative MAGE domain-containing protein MAGEA13P (341 aa).

2 disordered regions span residues 1–21 (MPHS…APKE) and 78–101 (KATP…GASQ). The span at 87 to 97 (ESSRSQEKKDP) shows a compositional bias: basic and acidic residues. An MAGE domain is found at 105 to 304 (LEKKVDELVK…SSFPLLYEEA (200 aa)).

The protein is Putative MAGE domain-containing protein MAGEA13P (MAGEA13P) of Homo sapiens (Human).